The primary structure comprises 261 residues: MNSKLSLSTKLSSSGKTQLAEYFATPPFKVITLPSYDDAWANGLNAMQMSSSPGVLAGDLLEIDISLAKLTALSLNTQAFTRVQAMNEGDSAMQTTHILLAENSRLFYLPHPLVLHRDSVFKQQTQIEMGEQSELIYGEIVAIGRVLNDERFAFRQFSSHLKIYALQNDGKKRPLVSDCIQWLPSKMNLTALSQMENYSHQGSLTYLNLAKNNAEIKQQVQALQQQSTEEKDLLIGISQLNEYGLMVRVLGCRAEANSEII.

Belongs to the UreD family. In terms of assembly, ureD, UreF and UreG form a complex that acts as a GTP-hydrolysis-dependent molecular chaperone, activating the urease apoprotein by helping to assemble the nickel containing metallocenter of UreC. The UreE protein probably delivers the nickel.

It localises to the cytoplasm. Its function is as follows. Required for maturation of urease via the functional incorporation of the urease nickel metallocenter. This Haemophilus influenzae (strain ATCC 51907 / DSM 11121 / KW20 / Rd) protein is Urease accessory protein UreD.